The sequence spans 151 residues: UPF0208 membrane protein YfbV (151 aa).

Helical transmembrane passes span 46-65 (FGIR…QIAL) and 69-91 (LGPA…WWLG).

The protein belongs to the UPF0208 family.

The protein localises to the cell inner membrane. This is UPF0208 membrane protein YfbV (yfbV) from Photorhabdus temperata.